A 467-amino-acid polypeptide reads, in one-letter code: Dihydrolipoyl dehydrogenase 3 (467 aa).

FAD-binding positions include 34-43 (EGRETLGGTC), lysine 52, and alanine 116. Cysteines 43 and 48 form a disulfide. Residues 182 to 186 (GAGVI), glutamate 205, valine 239, and 272 to 275 (AIGR) each bind NAD(+). Positions 314 and 322 each coordinate FAD. Histidine 446 (proton acceptor) is an active-site residue.

It belongs to the class-I pyridine nucleotide-disulfide oxidoreductase family. As to quaternary structure, homodimer. It depends on FAD as a cofactor.

Its subcellular location is the cytoplasm. The catalysed reaction is N(6)-[(R)-dihydrolipoyl]-L-lysyl-[protein] + NAD(+) = N(6)-[(R)-lipoyl]-L-lysyl-[protein] + NADH + H(+). LPD-3 may substitute for lipoamide dehydrogenase of the 2-oxoglutarate dehydrogenase and pyruvate multienzyme complexes when the latter is inactive or missing. The chain is Dihydrolipoyl dehydrogenase 3 (lpd3) from Pseudomonas aeruginosa (strain ATCC 15692 / DSM 22644 / CIP 104116 / JCM 14847 / LMG 12228 / 1C / PRS 101 / PAO1).